Here is a 372-residue protein sequence, read N- to C-terminus: Mitogen-activated protein kinase homolog NTF3 (372 aa).

A Protein kinase domain is found at 32–319 (YVPIKPIGRG…VIEALQHPYM (288 aa)). ATP-binding positions include 38 to 46 (IGRGAYGIV) and K61. The Proton acceptor role is filled by D158. A Phosphothreonine modification is found at T191. The TXY motif lies at 191 to 193 (TEY). A Phosphotyrosine modification is found at Y193.

The protein belongs to the protein kinase superfamily. CMGC Ser/Thr protein kinase family. MAP kinase subfamily. Mg(2+) is required as a cofactor. In terms of processing, dually phosphorylated on Thr-191 and Tyr-193, which activates the enzyme. Very low autophosphorylation, although dramatically increased when Mn(2+) is added to the reaction instead of Mg(2+). In terms of tissue distribution, ubiquitous.

The catalysed reaction is L-seryl-[protein] + ATP = O-phospho-L-seryl-[protein] + ADP + H(+). The enzyme catalyses L-threonyl-[protein] + ATP = O-phospho-L-threonyl-[protein] + ADP + H(+). Its activity is regulated as follows. Activated by tyrosine and threonine phosphorylation. This is Mitogen-activated protein kinase homolog NTF3 (NTF3) from Nicotiana tabacum (Common tobacco).